The primary structure comprises 327 residues: GTPase Obg (327 aa).

The 158-residue stretch at 3–160 (NKFTDFIKIY…FIFVLELKIL (158 aa)) folds into the Obg domain. The 167-residue stretch at 161 to 327 (ADVGLIGLPN…LIYYICNILS (167 aa)) folds into the OBG-type G domain. GTP contacts are provided by residues 167 to 174 (GLPNSGKS), 192 to 196 (FTTLN), 214 to 217 (DIPG), 281 to 284 (SKSD), and 308 to 310 (SSF). Positions 174 and 194 each coordinate Mg(2+).

It belongs to the TRAFAC class OBG-HflX-like GTPase superfamily. OBG GTPase family. Monomer. The cofactor is Mg(2+).

Its subcellular location is the cytoplasm. An essential GTPase which binds GTP, GDP and possibly (p)ppGpp with moderate affinity, with high nucleotide exchange rates and a fairly low GTP hydrolysis rate. Plays a role in control of the cell cycle, stress response, ribosome biogenesis and in those bacteria that undergo differentiation, in morphogenesis control. This is GTPase Obg from Karelsulcia muelleri (strain GWSS) (Sulcia muelleri).